The primary structure comprises 73 residues: Putative antitoxin VapB18 (73 aa).

Belongs to the UPF0330 family.

Possibly the antitoxin component of a type II toxin-antitoxin (TA) system. Its cognate toxin is VapC18 (Potential). This chain is Putative antitoxin VapB18 (vapB18), found in Archaeoglobus fulgidus (strain ATCC 49558 / DSM 4304 / JCM 9628 / NBRC 100126 / VC-16).